Consider the following 52-residue polypeptide: DNA import protein CedA2 (52 aa).

2 helical membrane-spanning segments follow: residues 1–21 (MKSY…VYIY) and 27–47 (ILVS…IIFE).

As to quaternary structure, forms a complex composed of CedA, CedA1 and CedA2.

Its subcellular location is the cell membrane. Its function is as follows. Part of the Ced system, which is involved in DNA import. This Sulfolobus acidocaldarius (strain ATCC 33909 / DSM 639 / JCM 8929 / NBRC 15157 / NCIMB 11770) protein is DNA import protein CedA2.